The chain runs to 289 residues: Rhodopsin (289 aa).

Residues 1-7 are Extracellular-facing; the sequence is YLVNPAA. The chain crosses the membrane as a helical span at residues 8–32; the sequence is YAALGAYMFLLILIGFPVNFLTLYV. At 33–44 the chain is on the cytoplasmic side; the sequence is TLEHKKLRTPLN. Residues 45-67 form a helical membrane-spanning segment; that stretch reads YILLNLAVADLFMVLGGFTTTMY. The Extracellular portion of the chain corresponds to 68–81; sequence TSMHGYFVLGRLGC. Cys-81 and Cys-158 are oxidised to a cystine. The helical transmembrane segment at 82–104 threads the bilayer; sequence NLEGFFATLGGEIALWSLVVLAI. A 'Ionic lock' involved in activated form stabilization motif is present at residues 105-107; sequence ERW. Over 105-123 the chain is Cytoplasmic; sequence ERWIVVCKPISNFRFTEDH. The chain crosses the membrane as a helical span at residues 124–144; the sequence is AIMGLAFSWVMALSCSVPPLV. The Extracellular segment spans residues 145–173; the sequence is GWSRYIPEAMQCSCGVDYYTRAEGFNTES. A helical transmembrane segment spans residues 174-195; that stretch reads FVLYMFTVHFLIPLSVIFFCYG. Residues 196–223 are Cytoplasmic-facing; that stretch reads RLLCAVKEAAAAQQESETTQRSEKEVSR. Residues 224 to 245 traverse the membrane as a helical segment; it reads MVVLMVIGFLVCWLPYASTAWW. The Extracellular portion of the chain corresponds to 246–257; the sequence is IFCNQGSEFGPV. Residues 258–279 form a helical membrane-spanning segment; that stretch reads FMTIPAFFAKSSAIYNPMIYIC. At Lys-267 the chain carries N6-(retinylidene)lysine. The Cytoplasmic segment spans residues 280-289; sequence MNKQFRHCMI.

Belongs to the G-protein coupled receptor 1 family. Opsin subfamily. In terms of processing, phosphorylated on some or all of the serine and threonine residues present in the C-terminal region. Post-translationally, contains one covalently linked retinal chromophore.

It localises to the membrane. It is found in the cell projection. Its subcellular location is the cilium. The protein localises to the photoreceptor outer segment. Photoreceptor required for image-forming vision at low light intensity. While most salt water fish species use retinal as chromophore, most freshwater fish use 3-dehydroretinal, or a mixture of retinal and 3-dehydroretinal. Light-induced isomerization of 11-cis to all-trans retinal triggers a conformational change that activates signaling via G-proteins. Subsequent receptor phosphorylation mediates displacement of the bound G-protein alpha subunit by arrestin and terminates signaling. This is Rhodopsin (rho) from Comephorus dybowskii.